The primary structure comprises 169 residues: Cell division inhibitor SulA (169 aa).

The interval 106–112 is ftsZ binding; it reads ALRTGNY. Positions 162–169 are lon protease binding; sequence KIHSNLYH.

This sequence belongs to the SulA family. As to quaternary structure, interacts with FtsZ. Is rapidly cleaved and degraded by the Lon protease once DNA damage is repaired.

In terms of biological role, component of the SOS system and an inhibitor of cell division. Accumulation of SulA causes rapid cessation of cell division and the appearance of long, non-septate filaments. In the presence of GTP, binds a polymerization-competent form of FtsZ in a 1:1 ratio, thus inhibiting FtsZ polymerization and therefore preventing it from participating in the assembly of the Z ring. This mechanism prevents the premature segregation of damaged DNA to daughter cells during cell division. The polypeptide is Cell division inhibitor SulA (Escherichia coli O7:K1 (strain IAI39 / ExPEC)).